Here is a 323-residue protein sequence, read N- to C-terminus: Quinolinate synthase (323 aa).

His38 and Ser55 together coordinate iminosuccinate. Residue Cys100 participates in [4Fe-4S] cluster binding. Residues 126-128 (YIN) and Ser143 contribute to the iminosuccinate site. A [4Fe-4S] cluster-binding site is contributed by Cys186. Iminosuccinate contacts are provided by residues 212 to 214 (HPE) and Thr229. Cys279 provides a ligand contact to [4Fe-4S] cluster.

It belongs to the quinolinate synthase family. Type 2 subfamily. [4Fe-4S] cluster serves as cofactor.

It localises to the cytoplasm. It carries out the reaction iminosuccinate + dihydroxyacetone phosphate = quinolinate + phosphate + 2 H2O + H(+). It functions in the pathway cofactor biosynthesis; NAD(+) biosynthesis; quinolinate from iminoaspartate: step 1/1. In terms of biological role, catalyzes the condensation of iminoaspartate with dihydroxyacetone phosphate to form quinolinate. In Gloeothece citriformis (strain PCC 7424) (Cyanothece sp. (strain PCC 7424)), this protein is Quinolinate synthase.